The sequence spans 256 residues: MLKFVILLCSIAYVFGAVVPLGMLSQSDGRIVGGVESKIEDFPWQISLQRDGRHYCGGSIYSKNVIITAAHCLRNVVAEELRVRVGSSYWEHGGSLRNISKFQIHESYVEPTKEYDVALLKLDSDLSFNSTIKAIELTNEIPPEYADAIVSGWGETLVPPPGIPDQLRSVDVKIIHREKCASRNFGYGSNIKASMICAYAIGKDSCQGDSGGPLVVNNLLVGVVSWGIDCARPSYPGVYVDVSHVRSLIVSNAESI.

The signal sequence occupies residues 1 to 22 (MLKFVILLCSIAYVFGAVVPLG). Residues 23–30 (MLSQSDGR) constitute a propeptide, activation peptide. Residues 31-254 (IVGGVESKIE…VRSLIVSNAE (224 aa)) enclose the Peptidase S1 domain. An intrachain disulfide couples cysteine 56 to cysteine 72. Residues histidine 71 and aspartate 116 each act as charge relay system in the active site. Disulfide bonds link cysteine 180–cysteine 197 and cysteine 206–cysteine 230. The active-site Charge relay system is the serine 210.

The protein belongs to the peptidase S1 family.

It is found in the secreted. In terms of biological role, specificity, limited to carboxyl side of arginine residue in B-chain of insulin. In Hypoderma lineatum (Early cattle grub), this protein is Hypodermin-A.